The chain runs to 576 residues: Sulfite reductase [NADPH] hemoprotein beta-component (576 aa).

Residues Cys435, Cys441, Cys480, and Cys484 each contribute to the [4Fe-4S] cluster site. Cys484 provides a ligand contact to siroheme.

This sequence belongs to the nitrite and sulfite reductase 4Fe-4S domain family. As to quaternary structure, alpha(8)-beta(8). The alpha component is a flavoprotein, the beta component is a hemoprotein. The cofactor is siroheme. It depends on [4Fe-4S] cluster as a cofactor.

It catalyses the reaction hydrogen sulfide + 3 NADP(+) + 3 H2O = sulfite + 3 NADPH + 4 H(+). Its pathway is sulfur metabolism; hydrogen sulfide biosynthesis; hydrogen sulfide from sulfite (NADPH route): step 1/1. In terms of biological role, component of the sulfite reductase complex that catalyzes the 6-electron reduction of sulfite to sulfide. This is one of several activities required for the biosynthesis of L-cysteine from sulfate. The sequence is that of Sulfite reductase [NADPH] hemoprotein beta-component from Yersinia pseudotuberculosis serotype O:1b (strain IP 31758).